A 214-amino-acid chain; its full sequence is MNLLIMGPPGGGKGTQCEVLVRELKITHISTGDMFRENVKGGTELGLKAKEYMDAGQLVPDELVVAMVKDRLSKPDCANGFLLDGFPRTVPQAEALDATLKDMGIILDAVLNIAVPRGKLLDRLTGRRVCRVCGATFHVLFNAPKEDGKCDKCGGELYQRSDDTEATVNQRLDVYEAQTQPLIEYYGKQGLLKEINGDQEIGKVTQDLLASLGR.

Residue 10-15 (GGGKGT) participates in ATP binding. The segment at 30-59 (STGDMFRENVKGGTELGLKAKEYMDAGQLV) is NMP. Residues threonine 31, arginine 36, 57–59 (QLV), 85–88 (GFPR), and glutamine 92 contribute to the AMP site. The LID stretch occupies residues 126 to 163 (GRRVCRVCGATFHVLFNAPKEDGKCDKCGGELYQRSDD). Position 127 (arginine 127) interacts with ATP. The Zn(2+) site is built by cysteine 130 and cysteine 133. An ATP-binding site is contributed by 136–137 (TF). The Zn(2+) site is built by cysteine 150 and cysteine 153. Positions 160 and 171 each coordinate AMP. Glutamine 199 provides a ligand contact to ATP.

The protein belongs to the adenylate kinase family. As to quaternary structure, monomer.

The protein resides in the cytoplasm. The catalysed reaction is AMP + ATP = 2 ADP. The protein operates within purine metabolism; AMP biosynthesis via salvage pathway; AMP from ADP: step 1/1. In terms of biological role, catalyzes the reversible transfer of the terminal phosphate group between ATP and AMP. Plays an important role in cellular energy homeostasis and in adenine nucleotide metabolism. The chain is Adenylate kinase from Desulforudis audaxviator (strain MP104C).